We begin with the raw amino-acid sequence, 378 residues long: Chorismate synthase (378 aa).

An NADP(+)-binding site is contributed by arginine 50. FMN is bound by residues 127–129, 255–256, glycine 300, 315–319, and arginine 342; these read RAS, NA, and KPTPS.

Belongs to the chorismate synthase family. FMNH2 is required as a cofactor.

The enzyme catalyses 5-O-(1-carboxyvinyl)-3-phosphoshikimate = chorismate + phosphate. It functions in the pathway metabolic intermediate biosynthesis; chorismate biosynthesis; chorismate from D-erythrose 4-phosphate and phosphoenolpyruvate: step 7/7. Functionally, catalyzes the anti-1,4-elimination of the C-3 phosphate and the C-6 proR hydrogen from 5-enolpyruvylshikimate-3-phosphate (EPSP) to yield chorismate, which is the branch point compound that serves as the starting substrate for the three terminal pathways of aromatic amino acid biosynthesis. This reaction introduces a second double bond into the aromatic ring system. This Methanocaldococcus jannaschii (strain ATCC 43067 / DSM 2661 / JAL-1 / JCM 10045 / NBRC 100440) (Methanococcus jannaschii) protein is Chorismate synthase.